Consider the following 68-residue polypeptide: MARVTVEDCLEKVDNRFLLVMLSSKRVKQLFKGARPLIDNRGANKNVVVSLREIAAGKIGCEIGKKGR.

The protein belongs to the RNA polymerase subunit omega family. The RNAP catalytic core consists of 2 alpha, 1 beta, 1 beta' and 1 omega subunit. When a sigma factor is associated with the core the holoenzyme is formed, which can initiate transcription.

It catalyses the reaction RNA(n) + a ribonucleoside 5'-triphosphate = RNA(n+1) + diphosphate. Its function is as follows. Promotes RNA polymerase assembly. Latches the N- and C-terminal regions of the beta' subunit thereby facilitating its interaction with the beta and alpha subunits. In Geobacter sp. (strain M21), this protein is DNA-directed RNA polymerase subunit omega.